Reading from the N-terminus, the 487-residue chain is Cyclic AMP-dependent transcription factor ATF-2 (487 aa).

The segment at phenylalanine 7–histidine 31 adopts a C2H2-type zinc-finger fold. Disordered regions lie at residues glutamate 106–glutamate 132 and glutamine 267–lysine 354. Residues glutamine 298–proline 319 show a composition bias toward low complexity. Positions alanine 328–arginine 345 are enriched in basic and acidic residues. One can recognise a bZIP domain in the interval aspartate 334–histidine 397. Residues lysine 336 to lysine 356 form a basic motif region. A leucine-zipper region spans residues leucine 362–leucine 390. The Nuclear export signal signature appears at valine 387–alanine 396. Residues lysine 407–serine 487 form a disordered region. Polar residues predominate over residues valine 425–histidine 436. Low complexity predominate over residues serine 437–serine 449. The span at serine 457 to glutamate 468 shows a compositional bias: polar residues.

This sequence belongs to the bZIP family. ATF subfamily. As to quaternary structure, binds DNA as a dimer and can form a homodimer in the absence of DNA. Can form a heterodimer with JUN. Heterodimerization is essential for its transcriptional activity.

It localises to the nucleus. Its subcellular location is the cytoplasm. The protein resides in the mitochondrion outer membrane. Its function is as follows. Transcriptional activator which regulates the transcription of various genes, including those involved in anti-apoptosis, cell growth, and DNA damage response. Dependent on its binding partner, binds to CRE (cAMP response element) consensus sequences (5'-TGACGTCA-3') or to AP-1 (activator protein 1) consensus sequences (5'-TGACTCA-3'). The sequence is that of Cyclic AMP-dependent transcription factor ATF-2 (ATF2) from Gallus gallus (Chicken).